Consider the following 91-residue polypeptide: Cytochrome b-c1 complex subunit 10, mitochondrial (91 aa).

The Mitochondrial matrix portion of the chain corresponds to 1 to 34; sequence MFATSILRSAYPAYKSPYGPKYQYQPHIDGITPK. Residues 35-58 form a helical membrane-spanning segment; that stretch reads QLVRILPTAAAWTGVALFAVVYYA. Topologically, residues 59-91 are mitochondrial intermembrane; it reads SGIPRLRRDVLQRIPYLGERYFVNEIPASDNPF.

The protein belongs to the UQCR11/QCR10 family. As to quaternary structure, component of the ubiquinol-cytochrome c oxidoreductase (cytochrome b-c1 complex, complex III, CIII), a multisubunit enzyme composed of 10 subunits. The complex is composed of 3 respiratory subunits cytochrome b (cob), cytochrome c1 (cyt-1) and Rieske protein (fes-1), 2 core protein subunits pep and ucr-1, and 5 low-molecular weight protein subunits qcr6, qcr7, qcr8, qcr9 and probably NCU16844/qcr10. The complex exists as an obligatory dimer and forms supercomplexes (SCs) in the inner mitochondrial membrane with NADH-ubiquinone oxidoreductase (complex I, CI) and cytochrome c oxidase (complex IV, CIV), resulting in different assemblies (supercomplexes SCI(1)III(2), SCIII(2)IV(1) and SCIII(2)IV(2) as well as higher order I(x)III(y)IV(z) megacomplexes).

The protein resides in the mitochondrion inner membrane. Its function is as follows. Component of the ubiquinol-cytochrome c oxidoreductase, a multisubunit transmembrane complex that is part of the mitochondrial electron transport chain which drives oxidative phosphorylation. The respiratory chain contains 3 multisubunit complexes succinate dehydrogenase (complex II, CII), ubiquinol-cytochrome c oxidoreductase (cytochrome b-c1 complex, complex III, CIII) and cytochrome c oxidase (complex IV, CIV), that cooperate to transfer electrons derived from NADH and succinate to molecular oxygen, creating an electrochemical gradient over the inner membrane that drives transmembrane transport and the ATP synthase. The cytochrome b-c1 complex catalyzes electron transfer from ubiquinol to cytochrome c, linking this redox reaction to translocation of protons across the mitochondrial inner membrane, with protons being carried across the membrane as hydrogens on the quinol. In the process called Q cycle, 2 protons are consumed from the matrix, 4 protons are released into the intermembrane space and 2 electrons are passed to cytochrome c. The protein is Cytochrome b-c1 complex subunit 10, mitochondrial of Neurospora crassa (strain ATCC 24698 / 74-OR23-1A / CBS 708.71 / DSM 1257 / FGSC 987).